The following is a 178-amino-acid chain: Caveolin-1 (178 aa).

Ser2 carries the N-acetylserine modification. Ser2 is modified (phosphoserine). Residues 2-94 (SGGKYVDSEG…WKASFTTFTV (93 aa)) form a required for homooligomerization region. The Cytoplasmic segment spans residues 2-104 (SGGKYVDSEG…TKYWFYRLLS (103 aa)). Lys5 is subject to N6-acetyllysine; alternate. Lys5 is covalently cross-linked (Glycyl lysine isopeptide (Lys-Gly) (interchain with G-Cter in ubiquitin); alternate). Tyr6 bears the Phosphotyrosine mark. Ser9 carries the post-translational modification Phosphoserine. Tyr14 carries the phosphotyrosine; by ABL1 modification. Position 25 is a phosphotyrosine (Tyr25). Residues Lys26 and Lys30 each participate in a glycyl lysine isopeptide (Lys-Gly) (interchain with G-Cter in ubiquitin) cross-link. Ser37 carries the phosphoserine modification. Glycyl lysine isopeptide (Lys-Gly) (interchain with G-Cter in ubiquitin) cross-links involve residues Lys39, Lys47, and Lys57. The interaction with CAVIN3 stretch occupies residues 82–94 (DGIWKASFTTFTV). An intramembrane region (helical) is located at residues 105–125 (ALFGIPMALIWGIYFAILSFL). At 126–178 (HIWAVVPCIKSFLIEIQCISRVYSIYVHTVCDPLFEAVGKIFSNVRINLQKEI) the chain is on the cytoplasmic side. Positions 131–142 (VPCIKSFLIEIQ) are interacts with SPRY1, SPRY2, SPRY3 and SPRY4. 3 S-palmitoyl cysteine lipidation sites follow: Cys133, Cys143, and Cys156. The interacts with SPRY1, SPRY2, and SPRY4 stretch occupies residues 149–160 (SIYVHTVCDPLF). The interacts with SPRY1, SPRY2, SPRY3 and SPRY4 stretch occupies residues 167-178 (FSNVRINLQKEI).

This sequence belongs to the caveolin family. In terms of assembly, homooligomer. Interacts (via the N-terminus) with DPP4; the interaction is direct. Forms a stable heterooligomeric complex with CAV2 that targets to lipid rafts and drives caveolae formation. Interacts with PACSIN2; this interaction induces membrane tubulation. Interacts with BMX, BTK, CTNNB1, CDH1, GLIPR2, JUP, NOSTRIN, SNAP25 and STX1A. Interacts with SLC7A9. Interacts with TGFBR1. Interacts with CAVIN3 (via leucine-zipper domain) in a cholesterol-sensitive manner. Interacts with CAVIN1. Interacts with EHD2 in a cholesterol-dependent manner. Forms a ternary complex with UBXN6 and VCP; mediates CAV1 targeting to lysosomes for degradation. Interacts with ABCG1; this interaction regulates ABCG1-mediated cholesterol efflux. Interacts with NEU3; this interaction enhances NEU3 sialidase activity within caveola. Interacts (via C-terminus) with SPRY1, SPRY2 (via C-terminus), SPRY3, and SPRY4. Interacts with IGFBP5; this interaction allows trafficking of IGFBP5 from the plasma membrane to the nucleus. Post-translationally, phosphorylated at Tyr-14 by ABL1 in response to oxidative stress. In terms of processing, ubiquitinated. Undergo monoubiquitination and multi- and/or polyubiquitination. Monoubiquitination of N-terminal lysines promotes integration in a ternary complex with UBXN6 and VCP which promotes oligomeric CAV1 targeting to lysosomes for degradation. Ubiquitinated by ZNRF1; leading to degradation and modulation of the TLR4-mediated immune response.

It is found in the golgi apparatus membrane. It localises to the cell membrane. The protein localises to the membrane. The protein resides in the caveola. Its subcellular location is the membrane raft. Functionally, may act as a scaffolding protein within caveolar membranes. Forms a stable heterooligomeric complex with CAV2 that targets to lipid rafts and drives caveolae formation. Mediates the recruitment of CAVIN proteins (CAVIN1/2/3/4) to the caveolae. Interacts directly with G-protein alpha subunits and can functionally regulate their activity. Involved in the costimulatory signal essential for T-cell receptor (TCR)-mediated T-cell activation. Its binding to DPP4 induces T-cell proliferation and NF-kappa-B activation in a T-cell receptor/CD3-dependent manner. Recruits CTNNB1 to caveolar membranes and may regulate CTNNB1-mediated signaling through the Wnt pathway. Negatively regulates TGFB1-mediated activation of SMAD2/3 by mediating the internalization of TGFBR1 from membrane rafts leading to its subsequent degradation. Binds 20(S)-hydroxycholesterol (20(S)-OHC). This is Caveolin-1 (CAV1) from Chlorocebus aethiops (Green monkey).